Reading from the N-terminus, the 422-residue chain is MIDLKFLRDNPDVVRASQITRGEDPALVDELISADESRREAIKAADDLRAEQKAFGKKIGQASPEDRPALLEGSNELKAKVKDAEAAQEAAEAKVNELQMKLSNVVSGAPAGGEDDFVVLETIGEPRTFDFEPKDHLELGESLGLIDMKRGTKVSGARFYYLTGDGAMLQLGMLMLAAQKAREAGFSMMIPPVLVRPEIMAGTGFLGDHSEEIYYLERDDMYLVGTSEVALAGYHKDEIIDLNEGPVKYAGWSSCFRREAGSYGKDTRGILRVHQFDKVEMFVYCKPEDAEDVHQQLLGMEKEMLAAIEVPYRVIDVAGGDLGASAARKFDTEAWVPTQDTYRELTSTSNCTTFQARRLQTRYRDENGKPQIAATLNGTLATTRWLVAILENNQQADGSVVVPEALRPFVGKDVLKPVKQAG.

226–228 is an L-serine binding site; sequence TSE. Residues 257 to 259 and Val-273 contribute to the ATP site; that span reads RRE. Glu-280 is an L-serine binding site. 344–347 contributes to the ATP binding site; the sequence is ELTS. Position 379 (Thr-379) interacts with L-serine.

This sequence belongs to the class-II aminoacyl-tRNA synthetase family. Type-1 seryl-tRNA synthetase subfamily. As to quaternary structure, homodimer. The tRNA molecule binds across the dimer.

Its subcellular location is the cytoplasm. It carries out the reaction tRNA(Ser) + L-serine + ATP = L-seryl-tRNA(Ser) + AMP + diphosphate + H(+). The enzyme catalyses tRNA(Sec) + L-serine + ATP = L-seryl-tRNA(Sec) + AMP + diphosphate + H(+). It functions in the pathway aminoacyl-tRNA biosynthesis; selenocysteinyl-tRNA(Sec) biosynthesis; L-seryl-tRNA(Sec) from L-serine and tRNA(Sec): step 1/1. Functionally, catalyzes the attachment of serine to tRNA(Ser). Is also able to aminoacylate tRNA(Sec) with serine, to form the misacylated tRNA L-seryl-tRNA(Sec), which will be further converted into selenocysteinyl-tRNA(Sec). The polypeptide is Serine--tRNA ligase (Corynebacterium glutamicum (strain ATCC 13032 / DSM 20300 / JCM 1318 / BCRC 11384 / CCUG 27702 / LMG 3730 / NBRC 12168 / NCIMB 10025 / NRRL B-2784 / 534)).